An 84-amino-acid chain; its full sequence is U21-theraphotoxin-Cg1a 1 (84 aa).

An N-terminal signal peptide occupies residues 1–21 (MKVSVLITLAVLGVMFLLTSA). A propeptide spanning residues 22 to 47 (EERGSDQMDSPAWLKSMEIIFQSEER) is cleaved from the precursor. 3 cysteine pairs are disulfide-bonded: Cys49–Cys63, Cys56–Cys68, and Cys62–Cys76. Val82 carries the post-translational modification Valine amide.

The protein belongs to the neurotoxin 10 (Hwtx-1) family. 05 (F4a) subfamily. In terms of tissue distribution, expressed by the venom gland.

Its subcellular location is the secreted. In terms of biological role, probable ion channel inhibitor. The sequence is that of U21-theraphotoxin-Cg1a 1 from Chilobrachys guangxiensis (Chinese earth tiger tarantula).